The primary structure comprises 447 residues: C4-dicarboxylate transport protein (447 aa).

8 helical membrane passes run 22–42 (FQVI…PLVG), 52–72 (FINL…VTGI), 90–110 (AYFL…AHVV), 159–179 (GNIL…ASVG), 199–219 (LVHI…AFTI), 232–252 (WLVG…LGVV), 325–347 (LFIA…LLVA), and 366–386 (AATL…ILGV).

This sequence belongs to the dicarboxylate/amino acid:cation symporter (DAACS) (TC 2.A.23) family.

It is found in the cell inner membrane. Functionally, responsible for the transport of dicarboxylates such as succinate, fumarate, and malate from the periplasm across the membrane. This chain is C4-dicarboxylate transport protein, found in Stenotrophomonas maltophilia (strain R551-3).